A 562-amino-acid polypeptide reads, in one-letter code: Probable malate:quinone oxidoreductase (562 aa).

The tract at residues 530-562 (EVPDKSATPPDPTIAPKHQHSPTHNANSEMQAL) is disordered. The span at 551–562 (PTHNANSEMQAL) shows a compositional bias: polar residues.

The protein belongs to the MQO family. FAD is required as a cofactor.

It catalyses the reaction (S)-malate + a quinone = a quinol + oxaloacetate. Its pathway is carbohydrate metabolism; tricarboxylic acid cycle; oxaloacetate from (S)-malate (quinone route): step 1/1. The sequence is that of Probable malate:quinone oxidoreductase from Xylella fastidiosa (strain 9a5c).